Consider the following 237-residue polypeptide: Glucosamine-6-phosphate deaminase (237 aa).

The Proton acceptor; for enolization step role is filled by Asp67. Asn136 acts as the For ring-opening step in catalysis. Catalysis depends on His138, which acts as the Proton acceptor; for ring-opening step. Glu143 serves as the catalytic For ring-opening step.

The protein belongs to the glucosamine/galactosamine-6-phosphate isomerase family. NagB subfamily.

It carries out the reaction alpha-D-glucosamine 6-phosphate + H2O = beta-D-fructose 6-phosphate + NH4(+). It functions in the pathway amino-sugar metabolism; N-acetylneuraminate degradation; D-fructose 6-phosphate from N-acetylneuraminate: step 5/5. Its function is as follows. Catalyzes the reversible isomerization-deamination of glucosamine 6-phosphate (GlcN6P) to form fructose 6-phosphate (Fru6P) and ammonium ion. In Lysinibacillus sphaericus (strain C3-41), this protein is Glucosamine-6-phosphate deaminase.